Here is a 399-residue protein sequence, read N- to C-terminus: uncharacterized protein (399 aa).

The disordered stretch occupies residues 375–399 (AAGGHRGSHGKSEQAATVRVVDDRR).

This sequence belongs to the mycobacterial PPE family.

This is an uncharacterized protein from Mycobacterium tuberculosis (strain CDC 1551 / Oshkosh).